A 182-amino-acid polypeptide reads, in one-letter code: Succinate dehydrogenase [ubiquinone] cytochrome b small subunit, mitochondrial (182 aa).

Residues 1 to 71 lie on the Mitochondrial matrix side of the membrane; that stretch reads MSLSLLLRGA…SAPRMASAGS (71 aa). The helical transmembrane segment at 72 to 96 threads the bilayer; it reads SHTLLWTVERIVSAGLLAVIPAAFI. Residues 97–101 are Mitochondrial intermembrane-facing; sequence APSQV. A helical membrane pass occupies residues 102–122; that stretch reads LDALMAISVVIHTHWGVEAMV. His-113 provides a ligand contact to heme. At 123–135 the chain is on the mitochondrial matrix side; sequence VDYMRPSVVGNVL. Tyr-125 serves as a coordination point for a ubiquinone. A helical transmembrane segment spans residues 136 to 157; it reads PKVAHIALIIISVATLGGLFYF. Over 158–182 the chain is Mitochondrial intermembrane; the sequence is IQNDVGLANGIKRFWAIKGKDAEKA.

This sequence belongs to the CybS family. In terms of assembly, forms part of complex II containing four subunits: a flavoprotein (FP), an iron-sulfur protein (IP) and a cytochrome b composed of a large and a small subunit.

The protein resides in the mitochondrion inner membrane. It functions in the pathway carbohydrate metabolism; tricarboxylic acid cycle. Membrane-anchoring subunit of succinate dehydrogenase (SDH) that is involved in complex II of the mitochondrial electron transport chain and is responsible for transferring electrons from succinate to ubiquinone (coenzyme Q). In Drosophila melanogaster (Fruit fly), this protein is Succinate dehydrogenase [ubiquinone] cytochrome b small subunit, mitochondrial.